Consider the following 280-residue polypeptide: uncharacterized protein (280 aa).

It belongs to the eukaryotic-type primase small subunit family.

This is an uncharacterized protein from Archaeoglobus fulgidus (strain ATCC 49558 / DSM 4304 / JCM 9628 / NBRC 100126 / VC-16).